Here is a 255-residue protein sequence, read N- to C-terminus: Small ribosomal subunit protein eS1 (255 aa).

Ala-2 is modified (N-acetylalanine; partial).

The protein belongs to the eukaryotic ribosomal protein eS1 family. Component of the small ribosomal subunit. Mature ribosomes consist of a small (40S) and a large (60S) subunit. The 40S subunit contains about 33 different proteins and 1 molecule of RNA (18S). The 60S subunit contains about 49 different proteins and 3 molecules of RNA (25S, 5.8S and 5S).

Its subcellular location is the cytoplasm. The sequence is that of Small ribosomal subunit protein eS1 from Vanderwaltozyma polyspora (strain ATCC 22028 / DSM 70294 / BCRC 21397 / CBS 2163 / NBRC 10782 / NRRL Y-8283 / UCD 57-17) (Kluyveromyces polysporus).